A 229-amino-acid chain; its full sequence is Large ribosomal subunit protein uL1c (229 aa).

It belongs to the universal ribosomal protein uL1 family. Part of the 50S ribosomal subunit.

It is found in the plastid. Its subcellular location is the chloroplast. Its function is as follows. Binds directly to 23S rRNA. Might be involved in E site tRNA release (Potential). In Porphyra purpurea (Red seaweed), this protein is Large ribosomal subunit protein uL1c (rpl1).